Here is a 593-residue protein sequence, read N- to C-terminus: Translation initiation factor rli1 (593 aa).

2 consecutive 4Fe-4S ferredoxin-type domains span residues Arg7–Ile39 and Arg46–Leu75. 2 consecutive ABC transporter domains span residues Ile70 to Gly318 and Phe334 to Leu556. ATP is bound by residues Gly110 to Ser117 and Gly382 to Thr389.

Belongs to the ABC transporter superfamily. As to quaternary structure, component of the multifactor complex (MFC). The complex associates with pre-initiation complexes.

It is found in the cytoplasm. The protein resides in the nucleus. In terms of biological role, component of the multifactor complex (MFC) involved in translation initiation. Required for the binding of MFC to the 40S ribosome. Required for the processing and nuclear export of the 60S and 40S ribosomal subunits. The polypeptide is Translation initiation factor rli1 (rli1) (Schizosaccharomyces pombe (strain 972 / ATCC 24843) (Fission yeast)).